Consider the following 597-residue polypeptide: MKNIRNFSIIAHIDHGKSTLSDRIIQLCGGLSDREMEAQVLDSMDLERERGITIKAQSVTLDYKAQDGQVYQLNFIDTPGHVDFSYEVSRSLAACEGALLVVDAGQGVEAQTLANCYTAIEMDLEVVPVLNKIDLPAADPDRVAQEIEDIVGIDATDAVRCSAKTGVGVGDVLERLVRDIPAPEGEPEAPLQALIIDSWFDNYLGVVSLIRIKNGTLRKGDKVKVMTTGQTYNADRLGIFTPKQVDRDVLNCGEVGWLVCAIKDIHGAPVGDTLTLARNPADVALPGFKKVKPQVYAGLFPVSSDDYDAFRDALGKLSLNDASLFYEPETSTALGFGFRCGFLGLLHMEIIQERLEREYDLDLITTAPTVVYEVETTRNEVIYVDSPSKLPAVNNIQELREPIAECHMLLPQEFLGNVITLCIEKRGVQTNMVYHGNQVALTYEIPMAEVVLDFFDRLKSTSRGYASLDYGFKRFQASDMVRVDVMVNSERVDALALITHRANANVRGRELVEKMKELIPRQQFDIAIQAAIGNQIIARSTVKQLRKNVLAKCYGGDVSRKKKLLQKQKEGKKRMKQIGNVELPQEAFLAILHVGKD.

The region spanning 2 to 184 (KNIRNFSIIA…RLVRDIPAPE (183 aa)) is the tr-type G domain. Residues 14-19 (DHGKST) and 131-134 (NKID) contribute to the GTP site.

Belongs to the TRAFAC class translation factor GTPase superfamily. Classic translation factor GTPase family. LepA subfamily.

The protein resides in the cell inner membrane. The enzyme catalyses GTP + H2O = GDP + phosphate + H(+). Its function is as follows. Required for accurate and efficient protein synthesis under certain stress conditions. May act as a fidelity factor of the translation reaction, by catalyzing a one-codon backward translocation of tRNAs on improperly translocated ribosomes. Back-translocation proceeds from a post-translocation (POST) complex to a pre-translocation (PRE) complex, thus giving elongation factor G a second chance to translocate the tRNAs correctly. Binds to ribosomes in a GTP-dependent manner. This chain is Elongation factor 4, found in Edwardsiella ictaluri (strain 93-146).